The primary structure comprises 200 residues: MGDEEKRKMEEKERKKAEVRKRLEEAAKAKKAGGKRGFMTPERKKKLRNLLRKKAAEELKKEQERKAEQRRKIIAERIGQPKPLDNCNEATLVGILKQYHARIAQLEDAKYDLEYEVRQKDFVINELTIQVNDLRGKFVKPALKKVSKFDKLKMVVKSTSEVDFRSSLKSVKKDAFKLDEENKADKKPEWALGSKKENEE.

2 disordered regions span residues 1–20 (MGDE…AEVR) and 181–200 (ENKA…ENEE). Positions 2 to 116 (GDEEKRKMEE…EDAKYDLEYE (115 aa)) form a coiled coil.

Belongs to the troponin I family. As to expression, expressed in salivary gland, gut, muscle and cuticle (at protein level).

Inhibits endothelial cell proliferation and angiogenesis in a vertebrate host. Probably required for efficient blood feeding on vertebrate hosts. The chain is Troponin I-like protein from Haemaphysalis longicornis (Bush tick).